The chain runs to 208 residues: Small ribosomal subunit protein uS4 (208 aa).

Residues 98 to 164 form the S4 RNA-binding domain; that stretch reads TRLDNVVYRL…PKVKSIREIA (67 aa).

It belongs to the universal ribosomal protein uS4 family. As to quaternary structure, part of the 30S ribosomal subunit. Contacts protein S5. The interaction surface between S4 and S5 is involved in control of translational fidelity.

One of the primary rRNA binding proteins, it binds directly to 16S rRNA where it nucleates assembly of the body of the 30S subunit. In terms of biological role, with S5 and S12 plays an important role in translational accuracy. This Ruminiclostridium cellulolyticum (strain ATCC 35319 / DSM 5812 / JCM 6584 / H10) (Clostridium cellulolyticum) protein is Small ribosomal subunit protein uS4.